The chain runs to 269 residues: 4-hydroxy-tetrahydrodipicolinate reductase (269 aa).

NAD(+)-binding positions include 9–14, Asp35, 102–104, and 128–131; these read GCAGKM, GTT, and APNF. Catalysis depends on His158, which acts as the Proton donor/acceptor. Residue His159 participates in (S)-2,3,4,5-tetrahydrodipicolinate binding. Lys162 (proton donor) is an active-site residue. A (S)-2,3,4,5-tetrahydrodipicolinate-binding site is contributed by 168–169; the sequence is GT.

The protein belongs to the DapB family.

It localises to the cytoplasm. The enzyme catalyses (S)-2,3,4,5-tetrahydrodipicolinate + NAD(+) + H2O = (2S,4S)-4-hydroxy-2,3,4,5-tetrahydrodipicolinate + NADH + H(+). The catalysed reaction is (S)-2,3,4,5-tetrahydrodipicolinate + NADP(+) + H2O = (2S,4S)-4-hydroxy-2,3,4,5-tetrahydrodipicolinate + NADPH + H(+). The protein operates within amino-acid biosynthesis; L-lysine biosynthesis via DAP pathway; (S)-tetrahydrodipicolinate from L-aspartate: step 4/4. Its function is as follows. Catalyzes the conversion of 4-hydroxy-tetrahydrodipicolinate (HTPA) to tetrahydrodipicolinate. The polypeptide is 4-hydroxy-tetrahydrodipicolinate reductase (Gloeobacter violaceus (strain ATCC 29082 / PCC 7421)).